The chain runs to 131 residues: Ribonuclease P protein component (131 aa).

The protein belongs to the RnpA family. As to quaternary structure, consists of a catalytic RNA component (M1 or rnpB) and a protein subunit.

The enzyme catalyses Endonucleolytic cleavage of RNA, removing 5'-extranucleotides from tRNA precursor.. Its function is as follows. RNaseP catalyzes the removal of the 5'-leader sequence from pre-tRNA to produce the mature 5'-terminus. It can also cleave other RNA substrates such as 4.5S RNA. The protein component plays an auxiliary but essential role in vivo by binding to the 5'-leader sequence and broadening the substrate specificity of the ribozyme. The sequence is that of Ribonuclease P protein component from Acinetobacter baylyi (strain ATCC 33305 / BD413 / ADP1).